A 1013-amino-acid polypeptide reads, in one-letter code: Antigenic heat-stable 120 kDa protein (1013 aa).

Disordered stretches follow at residues 1–73 (DTSE…TSDP) and 348–396 (GQSK…PQSQ). Residues 12-27 (EYTEEQKQKLEQEQKE) show a composition bias toward basic and acidic residues. Residues 47-61 (SASSAQSTPSISALS) show a composition bias toward low complexity. Polar residues-rich tracts occupy residues 62-73 (GNISPDSQTSDP), 348-373 (GQSKEQPLITPQQTASSSVESPQYKQ), and 380-396 (PTNQPLQPETSQMPQSQ).

The protein localises to the cytoplasm. The protein is Antigenic heat-stable 120 kDa protein (sca4) of Rickettsia rhipicephali.